A 73-amino-acid polypeptide reads, in one-letter code: UPF0154 protein BCG9842_B1526 (73 aa).

The helical transmembrane segment at 3 to 23 threads the bilayer; that stretch reads IWLGILVGVVALVAGVALGFF.

Belongs to the UPF0154 family.

It is found in the cell membrane. The polypeptide is UPF0154 protein BCG9842_B1526 (Bacillus cereus (strain G9842)).